A 348-amino-acid chain; its full sequence is Nicotinate-nucleotide--dimethylbenzimidazole phosphoribosyltransferase (348 aa).

The Proton acceptor role is filled by Glu-316.

This sequence belongs to the CobT family.

It catalyses the reaction 5,6-dimethylbenzimidazole + nicotinate beta-D-ribonucleotide = alpha-ribazole 5'-phosphate + nicotinate + H(+). It functions in the pathway nucleoside biosynthesis; alpha-ribazole biosynthesis; alpha-ribazole from 5,6-dimethylbenzimidazole: step 1/2. Catalyzes the synthesis of alpha-ribazole-5'-phosphate from nicotinate mononucleotide (NAMN) and 5,6-dimethylbenzimidazole (DMB). This is Nicotinate-nucleotide--dimethylbenzimidazole phosphoribosyltransferase from Xanthomonas euvesicatoria pv. vesicatoria (strain 85-10) (Xanthomonas campestris pv. vesicatoria).